We begin with the raw amino-acid sequence, 304 residues long: UDP-3-O-acyl-N-acetylglucosamine deacetylase (304 aa).

3 residues coordinate Zn(2+): His78, His237, and Asp241. His264 acts as the Proton donor in catalysis.

The protein belongs to the LpxC family. Zn(2+) serves as cofactor.

The catalysed reaction is a UDP-3-O-[(3R)-3-hydroxyacyl]-N-acetyl-alpha-D-glucosamine + H2O = a UDP-3-O-[(3R)-3-hydroxyacyl]-alpha-D-glucosamine + acetate. It participates in glycolipid biosynthesis; lipid IV(A) biosynthesis; lipid IV(A) from (3R)-3-hydroxytetradecanoyl-[acyl-carrier-protein] and UDP-N-acetyl-alpha-D-glucosamine: step 2/6. In terms of biological role, catalyzes the hydrolysis of UDP-3-O-myristoyl-N-acetylglucosamine to form UDP-3-O-myristoylglucosamine and acetate, the committed step in lipid A biosynthesis. The polypeptide is UDP-3-O-acyl-N-acetylglucosamine deacetylase (Legionella pneumophila (strain Lens)).